The chain runs to 162 residues: MLKITLIAACAENLCIGAGNAMPWHIPEDFAFFKAYTLGKPVIMGRKTWESLPVKPLPGRRNIVISRQADYCAAGAETAASLEAALALCAGAEEAVIMGGAQIYGQAMPLATDLRITEVDLSVEGDAFFPAIDRTHWKEAERTERRVSSKGTRYAFVHYLRY.

The region spanning 3–161 (KITLIAACAE…TRYAFVHYLR (159 aa)) is the DHFR domain. 7–9 (IAA) contacts substrate. NADP(+) contacts are provided by residues 8-9 (AA) and 16-21 (IGAGNA). Asp29 is a substrate binding site. 45 to 48 (GRKT) serves as a coordination point for NADP(+). Arg60 serves as a coordination point for substrate. Residues 65 to 68 (ISRQ) and 98 to 103 (MGGAQI) each bind NADP(+). Thr117 is a substrate binding site.

This sequence belongs to the dihydrofolate reductase family.

The catalysed reaction is (6S)-5,6,7,8-tetrahydrofolate + NADP(+) = 7,8-dihydrofolate + NADPH + H(+). It participates in cofactor biosynthesis; tetrahydrofolate biosynthesis; 5,6,7,8-tetrahydrofolate from 7,8-dihydrofolate: step 1/1. Its function is as follows. Key enzyme in folate metabolism. Catalyzes an essential reaction for de novo glycine and purine synthesis, and for DNA precursor synthesis. This is Dihydrofolate reductase (folA) from Neisseria meningitidis serogroup B (strain ATCC BAA-335 / MC58).